Reading from the N-terminus, the 130-residue chain is Small ribosomal subunit protein uS8 (130 aa).

It belongs to the universal ribosomal protein uS8 family. In terms of assembly, part of the 30S ribosomal subunit. Contacts proteins S5 and S12.

One of the primary rRNA binding proteins, it binds directly to 16S rRNA central domain where it helps coordinate assembly of the platform of the 30S subunit. This chain is Small ribosomal subunit protein uS8, found in Saccharophagus degradans (strain 2-40 / ATCC 43961 / DSM 17024).